Consider the following 439-residue polypeptide: ATP-dependent RNA helicase SUB2 (439 aa).

Over residues 1–19 the composition is skewed to acidic residues; the sequence is MSHEGEEDLLEYSDNEQEI. The disordered stretch occupies residues 1 to 48; the sequence is MSHEGEEDLLEYSDNEQEIQVDNKETAVEGTTENEATQENGEADKKGS. Positions 29-40 are enriched in polar residues; it reads EGTTENEATQEN. A Q motif motif is present at residues 55 to 83; the sequence is TGFKDFLLKPELSRAIIDCGFEHPSEVQQ. The Helicase ATP-binding domain maps to 86-261; that stretch reads IPQSIHGTDV…RRFLQNPLEI (176 aa). 99 to 106 provides a ligand contact to ATP; the sequence is AKSGLGKT. Residues 208–211 carry the DECD box motif; it reads DECD. A Helicase C-terminal domain is found at 273–434; sequence GLQQYYIKLE…EFPEEGIDPS (162 aa).

The protein belongs to the DEAD box helicase family. DECD subfamily.

The protein resides in the nucleus. The catalysed reaction is ATP + H2O = ADP + phosphate + H(+). Functionally, ATP-binding RNA helicase involved in transcription elongation and required for the export of mRNA out of the nucleus. SUB2 also plays a role in pre-mRNA splicing and spliceosome assembly. May be involved in rDNA and telomeric silencing, and maintenance of genome integrity. In Candida glabrata (strain ATCC 2001 / BCRC 20586 / JCM 3761 / NBRC 0622 / NRRL Y-65 / CBS 138) (Yeast), this protein is ATP-dependent RNA helicase SUB2 (SUB2).